The following is a 428-amino-acid chain: Glutamate-1-semialdehyde 2,1-aminomutase (428 aa).

The residue at position 267 (Lys-267) is an N6-(pyridoxal phosphate)lysine.

The protein belongs to the class-III pyridoxal-phosphate-dependent aminotransferase family. HemL subfamily. Homodimer. Pyridoxal 5'-phosphate is required as a cofactor.

The protein localises to the cytoplasm. The enzyme catalyses (S)-4-amino-5-oxopentanoate = 5-aminolevulinate. Its pathway is porphyrin-containing compound metabolism; protoporphyrin-IX biosynthesis; 5-aminolevulinate from L-glutamyl-tRNA(Glu): step 2/2. It functions in the pathway porphyrin-containing compound metabolism; chlorophyll biosynthesis. In Prochlorococcus marinus (strain NATL1A), this protein is Glutamate-1-semialdehyde 2,1-aminomutase.